The following is a 628-amino-acid chain: ATP-dependent RNA helicase mrh4, mitochondrial (628 aa).

Residues 1–40 (MSLAVRPPVCLLCRSGAPTLLPSSVSQVARSMATARLRRK) constitute a mitochondrion transit peptide. The disordered stretch occupies residues 51–109 (AKSSINQKRSGKAKFGPWSGMNQTEAHIRGEPRSRSQAALRRSGEKAADTPRKSDSPLY). The span at 92 to 105 (RSGEKAADTPRKSD) shows a compositional bias: basic and acidic residues. A Q motif motif is present at residues 137 to 170 (TSFDHFPLLPVVRHSIFSQALPGLVDVTPTPIQR). Positions 190 to 402 (EDGDPQYDQY…RKRYPDIKRL (213 aa)) constitute a Helicase ATP-binding domain. Residue 203-210 (AETGSGKT) participates in ATP binding. Positions 228 to 253 (DKENERKEEERKAKEKEERLKNRAFD) are enriched in basic and acidic residues. Residues 228 to 260 (DKENERKEEERKAKEKEERLKNRAFDLEPEEPP) form a disordered region. The DEAD box signature appears at 349–352 (DEAD). One can recognise a Helicase C-terminal domain in the interval 456–628 (YVGPNIKKIL…EGMFRGQALI (173 aa)).

The protein belongs to the DEAD box helicase family. MRH4 subfamily.

The protein localises to the mitochondrion. It carries out the reaction ATP + H2O = ADP + phosphate + H(+). Functionally, ATP-binding RNA helicase involved in mitochondrial RNA metabolism. Required for maintenance of mitochondrial DNA. The protein is ATP-dependent RNA helicase mrh4, mitochondrial (mrh4) of Aspergillus oryzae (strain ATCC 42149 / RIB 40) (Yellow koji mold).